A 397-amino-acid polypeptide reads, in one-letter code: L-asparaginase-like protein GD25160 (397 aa).

The first 22 residues, 1–22 (MLAQSCCLRLLILLLLFTSICS), serve as a signal peptide directing secretion. 3 cysteine pairs are disulfide-bonded: Cys-90-Cys-95, Cys-189-Cys-205, and Cys-344-Cys-371.

This sequence belongs to the Ntn-hydrolase family.

This is L-asparaginase-like protein GD25160 from Drosophila simulans (Fruit fly).